The chain runs to 225 residues: GTP cyclohydrolase 1 (225 aa).

The segment covering 1–12 (MERSKQSHDNQA) has biased composition (basic and acidic residues). A disordered region spans residues 1–59 (MERSKQSHDNQADSRPTTNESSLNGHFDGLVKKTPGMWDVKGRGTAGESSSHTGSSVVE). 2 stretches are compositionally biased toward polar residues: residues 13–24 (DSRPTTNESSLN) and 47–58 (GESSSHTGSSVV). Residues Cys-149, His-152, and Cys-220 each contribute to the Zn(2+) site.

It belongs to the GTP cyclohydrolase I family. In terms of assembly, toroid-shaped homodecamer, composed of two pentamers of five dimers.

It localises to the cytoplasm. The protein resides in the nucleus. The catalysed reaction is GTP + H2O = 7,8-dihydroneopterin 3'-triphosphate + formate + H(+). It functions in the pathway cofactor biosynthesis; 7,8-dihydroneopterin triphosphate biosynthesis; 7,8-dihydroneopterin triphosphate from GTP: step 1/1. Its activity is regulated as follows. GTP shows a positive allosteric effect, and tetrahydrobiopterin inhibits the enzyme activity. Zinc is required for catalytic activity. Inhibited by Mg(2+). In terms of biological role, may positively regulate nitric oxide synthesis in endothelial cells. May be involved in dopamine synthesis. May modify pain sensitivity and persistence. In Oncorhynchus mykiss (Rainbow trout), this protein is GTP cyclohydrolase 1 (gch1).